A 465-amino-acid polypeptide reads, in one-letter code: Cysteine--tRNA ligase (465 aa).

Cys-29 is a binding site for Zn(2+). A 'HIGH' region motif is present at residues 31–41 (PTVYNYIHIGN). Zn(2+) contacts are provided by Cys-209, His-234, and Glu-238. The short motif at 266 to 270 (KMSKS) is the 'KMSKS' region element. Lys-269 provides a ligand contact to ATP. Ser-270 bears the Phosphoserine mark.

Belongs to the class-I aminoacyl-tRNA synthetase family. Monomer. It depends on Zn(2+) as a cofactor.

The protein resides in the cytoplasm. It catalyses the reaction tRNA(Cys) + L-cysteine + ATP = L-cysteinyl-tRNA(Cys) + AMP + diphosphate. This Bacillus cereus (strain 03BB102) protein is Cysteine--tRNA ligase.